Reading from the N-terminus, the 923-residue chain is SPX and EXS domain-containing protein 1 (923 aa).

The region spanning 1–326 is the SPX domain; sequence MKFGKKLRFE…PMNSSIKLDQ (326 aa). Composition is skewed to low complexity over residues 94 to 147 and 186 to 195; these read QEQS…QQQQ and TTTTTTTTTT. Disordered regions lie at residues 94 to 150 and 185 to 208; these read QEQS…QDLK and PTTT…FKNK. 9 helical membrane-spanning segments follow: residues 382-402, 416-436, 471-491, 499-519, 529-551, 591-611, 620-640, 655-675, and 700-720; these read LKLG…IILF, FVST…VWLW, ASFL…TVTG, PAQV…FFPF, LLFI…RALF, SIAL…QCIL, IHLG…FSAL, ILWC…DVVV, and WSYY…TLTI. An EXS domain is found at 585–785; sequence RCNQVNSIAL…KNEVPKVESP (201 aa). Positions 793–871 are disordered; it reads SSYPYRQDNF…NNSPSGSNSS (79 aa).

It belongs to the SYG1 (TC 2.A.94) family.

The protein resides in the membrane. This chain is SPX and EXS domain-containing protein 1, found in Dictyostelium discoideum (Social amoeba).